A 71-amino-acid polypeptide reads, in one-letter code: Beta-defensin 124 (71 aa).

The N-terminal stretch at 1–22 is a signal peptide; sequence MTQLLLFLVALLVLGHVPSGRS. Intrachain disulfides connect C27–C54, C34–C48, and C38–C55.

This sequence belongs to the beta-defensin family.

The protein localises to the secreted. In terms of biological role, has antibacterial activity. The chain is Beta-defensin 124 (DEFB124) from Homo sapiens (Human).